Reading from the N-terminus, the 80-residue chain is MENLNMDLLYMAAAVMMGLAAIGAAIGIGILGGKFLEGAARQPDLIPLLRTQFFVVMGLVDAIPMIAVGLGLYVMFAVAK.

2 helical membrane passes run 11–31 (MAAAVMMGLAAIGAAIGIGIL) and 53–73 (FFVVMGLVDAIPMIAVGLGLY).

This sequence belongs to the ATPase C chain family. F-type ATPases have 2 components, F(1) - the catalytic core - and F(0) - the membrane proton channel. F(1) has five subunits: alpha(3), beta(3), gamma(1), delta(1), epsilon(1). F(0) has three main subunits: a(1), b(2) and c(10-14). The alpha and beta chains form an alternating ring which encloses part of the gamma chain. F(1) is attached to F(0) by a central stalk formed by the gamma and epsilon chains, while a peripheral stalk is formed by the delta and b chains.

Its subcellular location is the cell inner membrane. In terms of biological role, f(1)F(0) ATP synthase produces ATP from ADP in the presence of a proton or sodium gradient. F-type ATPases consist of two structural domains, F(1) containing the extramembraneous catalytic core and F(0) containing the membrane proton channel, linked together by a central stalk and a peripheral stalk. During catalysis, ATP synthesis in the catalytic domain of F(1) is coupled via a rotary mechanism of the central stalk subunits to proton translocation. Key component of the F(0) channel; it plays a direct role in translocation across the membrane. A homomeric c-ring of between 10-14 subunits forms the central stalk rotor element with the F(1) delta and epsilon subunits. The polypeptide is ATP synthase subunit c (Erwinia tasmaniensis (strain DSM 17950 / CFBP 7177 / CIP 109463 / NCPPB 4357 / Et1/99)).